Reading from the N-terminus, the 430-residue chain is DNA damage-inducible protein DIN7 (430 aa).

The tract at residues 1–96 (MGIPGLLPQL…HTETRRRKKR (96 aa)) is N-domain. The Mg(2+) site is built by Asp-30, Asp-78, Glu-150, Asp-152, Asp-171, Asp-173, and Asp-227. Residues 114 to 247 (NAMEYFQKSV…VTAMKIVKRY (134 aa)) form an I-domain region.

This sequence belongs to the XPG/RAD2 endonuclease family. The cofactor is Mg(2+).

Its subcellular location is the nucleus. 5'-&gt;3' double-stranded DNA exonuclease. This is DNA damage-inducible protein DIN7 (DIN7) from Saccharomyces cerevisiae (strain ATCC 204508 / S288c) (Baker's yeast).